Reading from the N-terminus, the 215-residue chain is Thymidylate kinase (215 aa).

13–20 (GLEGAGKS) lines the ATP pocket.

The protein belongs to the thymidylate kinase family.

The enzyme catalyses dTMP + ATP = dTDP + ADP. Phosphorylation of dTMP to form dTDP in both de novo and salvage pathways of dTTP synthesis. This is Thymidylate kinase from Shewanella frigidimarina (strain NCIMB 400).